A 101-amino-acid polypeptide reads, in one-letter code: Small ribosomal subunit protein uS14 (101 aa).

The disordered stretch occupies residues 51-70 (LPRDSSPSRQRNRCSQTGRP). The segment covering 52-68 (PRDSSPSRQRNRCSQTG) has biased composition (polar residues).

The protein belongs to the universal ribosomal protein uS14 family. In terms of assembly, part of the 30S ribosomal subunit. Contacts proteins S3 and S10.

In terms of biological role, binds 16S rRNA, required for the assembly of 30S particles and may also be responsible for determining the conformation of the 16S rRNA at the A site. The protein is Small ribosomal subunit protein uS14 of Mannheimia succiniciproducens (strain KCTC 0769BP / MBEL55E).